Here is a 521-residue protein sequence, read N- to C-terminus: Bifunctional purine biosynthesis protein PurH (521 aa).

The 150-residue stretch at 1-150 (MSEDRKAIKR…KNHPSVAVVT (150 aa)) folds into the MGS-like domain.

This sequence belongs to the PurH family.

It carries out the reaction (6R)-10-formyltetrahydrofolate + 5-amino-1-(5-phospho-beta-D-ribosyl)imidazole-4-carboxamide = 5-formamido-1-(5-phospho-D-ribosyl)imidazole-4-carboxamide + (6S)-5,6,7,8-tetrahydrofolate. It catalyses the reaction IMP + H2O = 5-formamido-1-(5-phospho-D-ribosyl)imidazole-4-carboxamide. It participates in purine metabolism; IMP biosynthesis via de novo pathway; 5-formamido-1-(5-phospho-D-ribosyl)imidazole-4-carboxamide from 5-amino-1-(5-phospho-D-ribosyl)imidazole-4-carboxamide (10-formyl THF route): step 1/1. Its pathway is purine metabolism; IMP biosynthesis via de novo pathway; IMP from 5-formamido-1-(5-phospho-D-ribosyl)imidazole-4-carboxamide: step 1/1. This is Bifunctional purine biosynthesis protein PurH from Corynebacterium efficiens (strain DSM 44549 / YS-314 / AJ 12310 / JCM 11189 / NBRC 100395).